A 332-amino-acid polypeptide reads, in one-letter code: Nucleoid-associated protein VIBHAR_03026 (332 aa).

The protein belongs to the YejK family.

Its subcellular location is the cytoplasm. The protein resides in the nucleoid. The sequence is that of Nucleoid-associated protein VIBHAR_03026 from Vibrio campbellii (strain ATCC BAA-1116).